The sequence spans 224 residues: Ribonuclease 3 (224 aa).

One can recognise an RNase III domain in the interval Tyr-4 to Gly-127. Mg(2+) is bound at residue Glu-40. Residue Asp-44 is part of the active site. Residues Asp-113 and Glu-116 each contribute to the Mg(2+) site. Residue Glu-116 is part of the active site. In terms of domain architecture, DRBM spans Asp-154 to Glu-223.

Belongs to the ribonuclease III family. In terms of assembly, homodimer. Mg(2+) is required as a cofactor.

Its subcellular location is the cytoplasm. The catalysed reaction is Endonucleolytic cleavage to 5'-phosphomonoester.. Its function is as follows. Digests double-stranded RNA. Involved in the processing of primary rRNA transcript to yield the immediate precursors to the large and small rRNAs (23S and 16S). Processes some mRNAs, and tRNAs when they are encoded in the rRNA operon. Processes pre-crRNA and tracrRNA of type II CRISPR loci if present in the organism. The protein is Ribonuclease 3 of Aliarcobacter butzleri (strain RM4018) (Arcobacter butzleri).